Consider the following 378-residue polypeptide: Chaperone protein DnaJ (378 aa).

The 66-residue stretch at 5-70 folds into the J domain; the sequence is DYYEVLGVAK…QKRAAYDQYG (66 aa). A CR-type zinc finger spans residues 138-216; that stretch reads GYDTQIRVPS…CHGSGKVKET (79 aa). Zn(2+) is bound by residues cysteine 151, cysteine 154, cysteine 168, cysteine 171, cysteine 190, cysteine 193, cysteine 204, and cysteine 207. 4 CXXCXGXG motif repeats span residues 151–158, 168–175, 190–197, and 204–211; these read CEVCHGSG, CPTCHGQG, CPKCHGTG, and CVHCHGSG.

Belongs to the DnaJ family. Homodimer. Zn(2+) is required as a cofactor.

The protein resides in the cytoplasm. In terms of biological role, participates actively in the response to hyperosmotic and heat shock by preventing the aggregation of stress-denatured proteins and by disaggregating proteins, also in an autonomous, DnaK-independent fashion. Unfolded proteins bind initially to DnaJ; upon interaction with the DnaJ-bound protein, DnaK hydrolyzes its bound ATP, resulting in the formation of a stable complex. GrpE releases ADP from DnaK; ATP binding to DnaK triggers the release of the substrate protein, thus completing the reaction cycle. Several rounds of ATP-dependent interactions between DnaJ, DnaK and GrpE are required for fully efficient folding. Also involved, together with DnaK and GrpE, in the DNA replication of plasmids through activation of initiation proteins. In Burkholderia ambifaria (strain MC40-6), this protein is Chaperone protein DnaJ.